We begin with the raw amino-acid sequence, 155 residues long: MRRRRAEIRKVPPDPIYNDVLVSKLINRVMWDGKKSIAQKIVYKAMEILAEKTKKAPLEALHQAIENVRPIVEVRPRRVGGATYQVPIEVQEPRKTSLALRWIVEAARAKKGRPMAEKLGEELVNAFNNTGTAIKKKEDVHRMAEANRAFAHFRW.

Belongs to the universal ribosomal protein uS7 family. In terms of assembly, part of the 30S ribosomal subunit. Contacts proteins S9 and S11.

Its function is as follows. One of the primary rRNA binding proteins, it binds directly to 16S rRNA where it nucleates assembly of the head domain of the 30S subunit. Is located at the subunit interface close to the decoding center, probably blocks exit of the E-site tRNA. This Thermosipho melanesiensis (strain DSM 12029 / CIP 104789 / BI429) protein is Small ribosomal subunit protein uS7.